Consider the following 178-residue polypeptide: Large ribosomal subunit protein uL6 (178 aa).

This sequence belongs to the universal ribosomal protein uL6 family. Part of the 50S ribosomal subunit.

This protein binds to the 23S rRNA, and is important in its secondary structure. It is located near the subunit interface in the base of the L7/L12 stalk, and near the tRNA binding site of the peptidyltransferase center. This Streptococcus thermophilus (strain CNRZ 1066) protein is Large ribosomal subunit protein uL6.